The sequence spans 114 residues: T cell receptor beta variable 6-1 (114 aa).

The signal sequence occupies residues 1-21; sequence MSIGLLCCVAFSLLWASPVNA. Residues 22–114 enclose the Ig-like domain; that stretch reads GVTQTPKFQV…TSVYFCASSE (93 aa). C42 and C110 are oxidised to a cystine. A glycan (N-linked (GlcNAc...) asparagine) is linked at N84.

In terms of assembly, alpha-beta TR is a heterodimer composed of an alpha and beta chain; disulfide-linked. The alpha-beta TR is associated with the transmembrane signaling CD3 coreceptor proteins to form the TR-CD3 (TcR or TCR). The assembly of alpha-beta TR heterodimers with CD3 occurs in the endoplasmic reticulum where a single alpha-beta TR heterodimer associates with one CD3D-CD3E heterodimer, one CD3G-CD3E heterodimer and one CD247 homodimer forming a stable octameric structure. CD3D-CD3E and CD3G-CD3E heterodimers preferentially associate with TR alpha and TR beta chains, respectively. The association of the CD247 homodimer is the last step of TcR assembly in the endoplasmic reticulum and is required for transport to the cell surface.

The protein localises to the cell membrane. Functionally, v region of the variable domain of T cell receptor (TR) beta chain that participates in the antigen recognition. Alpha-beta T cell receptors are antigen specific receptors which are essential to the immune response and are present on the cell surface of T lymphocytes. Recognize peptide-major histocompatibility (MH) (pMH) complexes that are displayed by antigen presenting cells (APC), a prerequisite for efficient T cell adaptive immunity against pathogens. Binding of alpha-beta TR to pMH complex initiates TR-CD3 clustering on the cell surface and intracellular activation of LCK that phosphorylates the ITAM motifs of CD3G, CD3D, CD3E and CD247 enabling the recruitment of ZAP70. In turn ZAP70 phosphorylates LAT, which recruits numerous signaling molecules to form the LAT signalosome. The LAT signalosome propagates signal branching to three major signaling pathways, the calcium, the mitogen-activated protein kinase (MAPK) kinase and the nuclear factor NF-kappa-B (NF-kB) pathways, leading to the mobilization of transcription factors that are critical for gene expression and essential for T cell growth and differentiation. The T cell repertoire is generated in the thymus, by V-(D)-J rearrangement. This repertoire is then shaped by intrathymic selection events to generate a peripheral T cell pool of self-MH restricted, non-autoaggressive T cells. Post-thymic interaction of alpha-beta TR with the pMH complexes shapes TR structural and functional avidity. The polypeptide is T cell receptor beta variable 6-1 (Homo sapiens (Human)).